The primary structure comprises 429 residues: 3-phosphoshikimate 1-carboxyvinyltransferase (429 aa).

Lys20, Ser21, and Arg25 together coordinate 3-phosphoshikimate. Lys20 lines the phosphoenolpyruvate pocket. Phosphoenolpyruvate-binding residues include Gly89 and Arg118. Residues Ser164, Ser165, Gln166, Ser192, Asp311, and Lys338 each coordinate 3-phosphoshikimate. Gln166 is a binding site for phosphoenolpyruvate. The active-site Proton acceptor is Asp311. Phosphoenolpyruvate contacts are provided by Arg342 and Arg384.

The protein belongs to the EPSP synthase family. As to quaternary structure, monomer.

Its subcellular location is the cytoplasm. It catalyses the reaction 3-phosphoshikimate + phosphoenolpyruvate = 5-O-(1-carboxyvinyl)-3-phosphoshikimate + phosphate. Its pathway is metabolic intermediate biosynthesis; chorismate biosynthesis. Catalyzes the transfer of the enolpyruvyl moiety of phosphoenolpyruvate (PEP) to the 5-hydroxyl of shikimate-3-phosphate (S3P) to produce enolpyruvyl shikimate-3-phosphate and inorganic phosphate. This Methanococcus maripaludis (strain C5 / ATCC BAA-1333) protein is 3-phosphoshikimate 1-carboxyvinyltransferase.